A 344-amino-acid polypeptide reads, in one-letter code: Uroporphyrinogen decarboxylase (344 aa).

Substrate contacts are provided by residues 26 to 30, aspartate 75, tyrosine 150, serine 205, and histidine 323; that span reads RQAGR.

This sequence belongs to the uroporphyrinogen decarboxylase family. As to quaternary structure, homodimer.

It localises to the cytoplasm. The catalysed reaction is uroporphyrinogen III + 4 H(+) = coproporphyrinogen III + 4 CO2. The protein operates within porphyrin-containing compound metabolism; protoporphyrin-IX biosynthesis; coproporphyrinogen-III from 5-aminolevulinate: step 4/4. Its function is as follows. Catalyzes the decarboxylation of four acetate groups of uroporphyrinogen-III to yield coproporphyrinogen-III. This chain is Uroporphyrinogen decarboxylase, found in Corynebacterium diphtheriae (strain ATCC 700971 / NCTC 13129 / Biotype gravis).